Reading from the N-terminus, the 547-residue chain is Genetic interactor of prohibitins 3, mitochondrial (547 aa).

Residues M1–I22 constitute a mitochondrion transit peptide. Positions E105–S290 constitute a CP-type G domain.

This sequence belongs to the TRAFAC class YlqF/YawG GTPase family. GEP3 subfamily.

The protein resides in the mitochondrion. Its function is as follows. May be involved in the mitochondrial lipid metabolism. The polypeptide is Genetic interactor of prohibitins 3, mitochondrial (GEP3) (Eremothecium gossypii (strain ATCC 10895 / CBS 109.51 / FGSC 9923 / NRRL Y-1056) (Yeast)).